Here is a 367-residue protein sequence, read N- to C-terminus: Biotin--protein ligase 1, chloroplastic (367 aa).

The transit peptide at 1–37 (MEAVRSTTTLSNFHLLNILVLRSLKPLHRLSFSFSAS) directs the protein to the chloroplast. A BPL/LPL catalytic domain is found at 105–289 (IITHRFGRFL…KFEKFFDLFM (185 aa)). Biotin is bound by residues 122-124 (STH), Gln-145, 149-151 (RGR), and Lys-220.

This sequence belongs to the biotin--protein ligase family. In terms of tissue distribution, expressed in roots, leaves, stems, flowers, siliques and seeds.

It is found in the plastid. It localises to the chloroplast. Its subcellular location is the cytoplasm. The protein localises to the cytosol. The enzyme catalyses apo-[3-methylcrotonoyl-CoA:carbon-dioxide ligase (ADP-forming)] + biotin + ATP = holo-[3-methylcrotonoyl-CoA:carbon-dioxide ligase (ADP-forming)] + AMP + diphosphate + H(+). It carries out the reaction biotin + L-lysyl-[protein] + ATP = N(6)-biotinyl-L-lysyl-[protein] + AMP + diphosphate + H(+). Functionally, plays a major role in biotin-dependent carboxylase biotinylation. Catalyzes the addition of biotin to the biotin carboxyl carrier protein (BCCP) subunit of acetyl-CoA carboxylase. Can also biotinylate methylcrotonyl-CoA carboxylase. Is responsible for most, if not all, biotin--protein ligase activity in Arabidopsis. Is essential for plant viability and required for ovule development. The polypeptide is Biotin--protein ligase 1, chloroplastic (Arabidopsis thaliana (Mouse-ear cress)).